The primary structure comprises 348 residues: Ferredoxin--NADP reductase 1 (348 aa).

FAD is bound by residues Asp33, Lys41, Tyr45, Val85, Leu120, Asp287, and Ser328.

It belongs to the ferredoxin--NADP reductase type 2 family. In terms of assembly, homodimer. FAD serves as cofactor.

The catalysed reaction is 2 reduced [2Fe-2S]-[ferredoxin] + NADP(+) + H(+) = 2 oxidized [2Fe-2S]-[ferredoxin] + NADPH. This chain is Ferredoxin--NADP reductase 1, found in Oceanobacillus iheyensis (strain DSM 14371 / CIP 107618 / JCM 11309 / KCTC 3954 / HTE831).